The following is a 157-amino-acid chain: Peptide methionine sulfoxide reductase MsrA (157 aa).

Cys10 is a catalytic residue.

The protein belongs to the MsrA Met sulfoxide reductase family.

It catalyses the reaction L-methionyl-[protein] + [thioredoxin]-disulfide + H2O = L-methionyl-(S)-S-oxide-[protein] + [thioredoxin]-dithiol. It carries out the reaction [thioredoxin]-disulfide + L-methionine + H2O = L-methionine (S)-S-oxide + [thioredoxin]-dithiol. In terms of biological role, has an important function as a repair enzyme for proteins that have been inactivated by oxidation. Catalyzes the reversible oxidation-reduction of methionine sulfoxide in proteins to methionine. In Clostridium botulinum (strain Loch Maree / Type A3), this protein is Peptide methionine sulfoxide reductase MsrA.